The sequence spans 198 residues: MEHYISLLVRAVFVENMALAFFLGMCTFLAVSKKVSTAFGLGIAVTVVLGISVPANNLVYNLVLRDGALVEGVDLSFLNFITFIGVIAAIVQVLEMILDRYFPALYNALGIFLPLITVNCAIFGGVSFMAQRDYNFPESIVYGFGSGMGWMLAIVALAGIREKMKYANVPAGLQGLGITFISTGLMALGFMSFAGVNL.

Helical transmembrane passes span 11–31, 35–55, 77–97, 109–129, 140–160, and 176–196; these read AVFV…FLAV, VSTA…SVPA, FLNF…LEMI, LGIF…VSFM, IVYG…LAGI, and LGIT…FAGV.

Belongs to the NqrDE/RnfAE family. As to quaternary structure, composed of six subunits; NqrA, NqrB, NqrC, NqrD, NqrE and NqrF.

The protein resides in the cell inner membrane. It carries out the reaction a ubiquinone + n Na(+)(in) + NADH + H(+) = a ubiquinol + n Na(+)(out) + NAD(+). NQR complex catalyzes the reduction of ubiquinone-1 to ubiquinol by two successive reactions, coupled with the transport of Na(+) ions from the cytoplasm to the periplasm. NqrA to NqrE are probably involved in the second step, the conversion of ubisemiquinone to ubiquinol. This chain is Na(+)-translocating NADH-quinone reductase subunit E, found in Yersinia pestis bv. Antiqua (strain Nepal516).